Reading from the N-terminus, the 221-residue chain is Adenylate kinase (221 aa).

10 to 15 (GAGKGT) contacts ATP. Residues 30–59 (STGDMLRAAVKAGTPLGLEAKRFMDAGELV) form an NMP region. AMP is bound by residues Thr-31, Arg-36, 57 to 59 (ELV), 85 to 88 (GFPR), and Gln-92. An LID region spans residues 122-159 (GRRSHAASGRTYHVKFNPPKVEGVDDMTGEPLIQRDDD). ATP is bound by residues Arg-123 and 132-133 (TY). 2 residues coordinate AMP: Arg-156 and Arg-167. Gly-207 contributes to the ATP binding site.

This sequence belongs to the adenylate kinase family. Monomer.

Its subcellular location is the cytoplasm. The catalysed reaction is AMP + ATP = 2 ADP. The protein operates within purine metabolism; AMP biosynthesis via salvage pathway; AMP from ADP: step 1/1. Functionally, catalyzes the reversible transfer of the terminal phosphate group between ATP and AMP. Plays an important role in cellular energy homeostasis and in adenine nucleotide metabolism. The polypeptide is Adenylate kinase (Paraburkholderia phytofirmans (strain DSM 17436 / LMG 22146 / PsJN) (Burkholderia phytofirmans)).